A 436-amino-acid polypeptide reads, in one-letter code: GTPase Der (436 aa).

EngA-type G domains lie at P4 to E167 and I175 to N351. GTP-binding positions include G10–S17, D57–I61, N119–D122, G181–S188, D229–M233, and N294–D297. In terms of domain architecture, KH-like spans K352–K436.

It belongs to the TRAFAC class TrmE-Era-EngA-EngB-Septin-like GTPase superfamily. EngA (Der) GTPase family. In terms of assembly, associates with the 50S ribosomal subunit.

Functionally, GTPase that plays an essential role in the late steps of ribosome biogenesis. The sequence is that of GTPase Der from Streptococcus pyogenes serotype M3 (strain ATCC BAA-595 / MGAS315).